The primary structure comprises 408 residues: ATP phosphoribosyltransferase regulatory subunit (408 aa).

Belongs to the class-II aminoacyl-tRNA synthetase family. HisZ subfamily. Heteromultimer composed of HisG and HisZ subunits.

It is found in the cytoplasm. It functions in the pathway amino-acid biosynthesis; L-histidine biosynthesis; L-histidine from 5-phospho-alpha-D-ribose 1-diphosphate: step 1/9. In terms of biological role, required for the first step of histidine biosynthesis. May allow the feedback regulation of ATP phosphoribosyltransferase activity by histidine. This chain is ATP phosphoribosyltransferase regulatory subunit, found in Gloeothece citriformis (strain PCC 7424) (Cyanothece sp. (strain PCC 7424)).